The following is a 328-amino-acid chain: Putative tyrosine-protein kinase C03B1.5 (328 aa).

One can recognise a Protein kinase domain in the interval Trp25–Leu288. ATP-binding positions include Ile31–Val39 and Lys62. Residue Asp155 is the Proton acceptor of the active site.

It belongs to the protein kinase superfamily. Tyr protein kinase family.

The enzyme catalyses L-tyrosyl-[protein] + ATP = O-phospho-L-tyrosyl-[protein] + ADP + H(+). This Caenorhabditis elegans protein is Putative tyrosine-protein kinase C03B1.5.